Reading from the N-terminus, the 245-residue chain is NAD(P)H-quinone oxidoreductase subunit K (245 aa).

Residues Cys58, Cys59, Cys123, and Cys154 each contribute to the [4Fe-4S] cluster site.

Belongs to the complex I 20 kDa subunit family. In terms of assembly, NDH-1 can be composed of about 15 different subunits; different subcomplexes with different compositions have been identified which probably have different functions. Requires [4Fe-4S] cluster as cofactor.

It is found in the cellular thylakoid membrane. The enzyme catalyses a plastoquinone + NADH + (n+1) H(+)(in) = a plastoquinol + NAD(+) + n H(+)(out). It carries out the reaction a plastoquinone + NADPH + (n+1) H(+)(in) = a plastoquinol + NADP(+) + n H(+)(out). Functionally, NDH-1 shuttles electrons from an unknown electron donor, via FMN and iron-sulfur (Fe-S) centers, to quinones in the respiratory and/or the photosynthetic chain. The immediate electron acceptor for the enzyme in this species is believed to be plastoquinone. Couples the redox reaction to proton translocation, and thus conserves the redox energy in a proton gradient. Cyanobacterial NDH-1 also plays a role in inorganic carbon-concentration. The sequence is that of NAD(P)H-quinone oxidoreductase subunit K from Trichormus variabilis (strain ATCC 29413 / PCC 7937) (Anabaena variabilis).